We begin with the raw amino-acid sequence, 244 residues long: Cell division protein ZapD (244 aa).

The protein belongs to the ZapD family. In terms of assembly, interacts with FtsZ.

The protein resides in the cytoplasm. Functionally, cell division factor that enhances FtsZ-ring assembly. Directly interacts with FtsZ and promotes bundling of FtsZ protofilaments, with a reduction in FtsZ GTPase activity. This Shewanella baltica (strain OS223) protein is Cell division protein ZapD.